The primary structure comprises 276 residues: MRFSKMHGLGNDFVIIDSITQKVYFNSDKIRSLSNRFYGIGFDQLLVVEPPYDPNIDFHCRIYNADGSEVYQCGNGIRCVARFVCIKKLTNKQHIKISTDTYSMMLSVLDSEFISVNMGEPIFDPIKIPFFSTQYQKMYVLFVPNFTILCGVVSIGNPHCVILVEQVDLVPVTVLGSILENHHCFPKKANISFMQIISQNNIKLRVYERGSGETKACGSAACAAVAIGIQQGLLKKNISVQVNLPGGDLFISWKGLGYPLYMIGSATYIYDGCINL.

Residues asparagine 11, glutamine 44, and asparagine 64 each contribute to the substrate site. Cysteine 73 acts as the Proton donor in catalysis. Substrate-binding positions include 74–75 (GN), asparagine 157, asparagine 190, and 208–209 (ER). The active-site Proton acceptor is the cysteine 217. Residue 218–219 (GS) participates in substrate binding.

Belongs to the diaminopimelate epimerase family. Homodimer.

The protein resides in the cytoplasm. It carries out the reaction (2S,6S)-2,6-diaminopimelate = meso-2,6-diaminopimelate. It functions in the pathway amino-acid biosynthesis; L-lysine biosynthesis via DAP pathway; DL-2,6-diaminopimelate from LL-2,6-diaminopimelate: step 1/1. In terms of biological role, catalyzes the stereoinversion of LL-2,6-diaminopimelate (L,L-DAP) to meso-diaminopimelate (meso-DAP), a precursor of L-lysine and an essential component of the bacterial peptidoglycan. The sequence is that of Diaminopimelate epimerase from Blochmanniella floridana.